The following is a 200-amino-acid chain: uncharacterized protein (200 aa).

This is an uncharacterized protein from Commelina yellow mottle virus (CoYMV).